Consider the following 98-residue polypeptide: uncharacterized protein (98 aa).

Belongs to the HesB/IscA family.

This is an uncharacterized protein from Staphylococcus epidermidis (strain ATCC 35984 / DSM 28319 / BCRC 17069 / CCUG 31568 / BM 3577 / RP62A).